Consider the following 206-residue polypeptide: Ribosomal RNA small subunit methyltransferase G (206 aa).

S-adenosyl-L-methionine contacts are provided by residues Gly73, Leu78, 124-125 (VE), and Arg139.

Belongs to the methyltransferase superfamily. RNA methyltransferase RsmG family.

The protein resides in the cytoplasm. It catalyses the reaction guanosine(527) in 16S rRNA + S-adenosyl-L-methionine = N(7)-methylguanosine(527) in 16S rRNA + S-adenosyl-L-homocysteine. Its function is as follows. Specifically methylates the N7 position of guanine in position 527 of 16S rRNA. The polypeptide is Ribosomal RNA small subunit methyltransferase G (Photorhabdus laumondii subsp. laumondii (strain DSM 15139 / CIP 105565 / TT01) (Photorhabdus luminescens subsp. laumondii)).